The chain runs to 287 residues: ATP phosphoribosyltransferase (287 aa).

The protein belongs to the ATP phosphoribosyltransferase family. Long subfamily. In terms of assembly, equilibrium between an active dimeric form, an inactive hexameric form and higher aggregates. Interconversion between the various forms is largely reversible and is influenced by the natural substrates and inhibitors of the enzyme. Mg(2+) is required as a cofactor.

Its subcellular location is the cytoplasm. The enzyme catalyses 1-(5-phospho-beta-D-ribosyl)-ATP + diphosphate = 5-phospho-alpha-D-ribose 1-diphosphate + ATP. Its pathway is amino-acid biosynthesis; L-histidine biosynthesis; L-histidine from 5-phospho-alpha-D-ribose 1-diphosphate: step 1/9. With respect to regulation, feedback inhibited by histidine. Catalyzes the condensation of ATP and 5-phosphoribose 1-diphosphate to form N'-(5'-phosphoribosyl)-ATP (PR-ATP). Has a crucial role in the pathway because the rate of histidine biosynthesis seems to be controlled primarily by regulation of HisG enzymatic activity. The sequence is that of ATP phosphoribosyltransferase (hisG) from Mycobacterium leprae (strain TN).